We begin with the raw amino-acid sequence, 315 residues long: MVSSVLSIPPQTCLLPRLPISDSVNCKSKIVYCLSTSVRGSSVKRQSTARTRSFTETNRRTPSVQSKHEFWEDPDDGSDSENEYEGEEEDGIGNDLDNESDWEDDSRVQKLTTTDNYEEELAKEVEQLLEPEERVILQQNEKPNLKMISTKSWKPLQTLALSMQIQLMDNLIENGLDIDDVDKDNQTALHKAIIGKKEAVISHLLRKGANPHLQDRDGAAPIHYAVQVGALQTVKLLFKYNVDVNVADNEGWTPLHIAVQSRNRDITKILLTNGADKTRRTKDGKLALDLALCFGRDFKSYDLVKLLKIMPTGDI.

The N-terminal 39 residues, 1 to 39 (MVSSVLSIPPQTCLLPRLPISDSVNCKSKIVYCLSTSVR), are a transit peptide targeting the chloroplast. Residues 44–65 (KRQSTARTRSFTETNRRTPSVQ) show a composition bias toward polar residues. A disordered region spans residues 44 to 106 (KRQSTARTRS…DNESDWEDDS (63 aa)). Residues 72–104 (EDPDDGSDSENEYEGEEEDGIGNDLDNESDWED) are compositionally biased toward acidic residues. 5 ANK repeats span residues 151–180 (KSWK…DIDD), 184–213 (DNQT…NPHL), 217–246 (DGAA…DVNV), 250–279 (EGWT…DKTR), and 283–307 (DGKL…VKLL).

In terms of assembly, interacts with AKR. No homodimerization observed. Expressed in roots, inflorescence stems, flowers, siliques, dry seeds and mature cauline leaves.

The protein resides in the plastid. Its subcellular location is the chloroplast. Its function is as follows. Involved in the initial differentiation of the proplastid during the embryo development. Also required for correct cotyledon, true leaf and cauline leaf margin development. The polypeptide is Ankyrin repeat domain-containing protein EMB506, chloroplastic (EMB506) (Arabidopsis thaliana (Mouse-ear cress)).